A 250-amino-acid chain; its full sequence is Small ribosomal subunit protein uS2 (250 aa).

Belongs to the universal ribosomal protein uS2 family.

This chain is Small ribosomal subunit protein uS2, found in Paraburkholderia phymatum (strain DSM 17167 / CIP 108236 / LMG 21445 / STM815) (Burkholderia phymatum).